The chain runs to 106 residues: Transcriptional and immune response regulator (106 aa).

Monomer. Interacts with NOTCH2 (via ANK repeats), the interaction inhibits the nuclear translocation of NOTCH2 N2ICD. Interacts (C-terminus) with CBY1 (C-terminus), TCIM competes with CTNNB1 for the interaction with CBY1. In terms of tissue distribution, ubiquitous. Expressed in thyroid papillary carcinoma. Expressed in liver, expression levels decrease in hepatocellular carcinoma. Slightly detected in normal lung, its expression is highly induced in lung cancer cells (at protein level).

It is found in the cytoplasm. The protein resides in the nucleus. The protein localises to the nucleolus. It localises to the nucleus speckle. Functionally, seems to be involved in the regulation of cell growth an differentiation, may play different and opposite roles depending on the tissue or cell type. May enhance the WNT-CTNNB1 pathway by relieving antagonistic activity of CBY1. Enhances the proliferation of follicular dendritic cells. Plays a role in the mitogen-activated MAPK2/3 signaling pathway, positively regulates G1-to-S-phase transition of the cell cycle. In endothelial cells, enhances key inflammatory mediators and inflammatory response through the modulation of NF-kappaB transcriptional regulatory activity. Involved in the regulation of heat shock response, seems to play a positive feedback with HSF1 to modulate heat-shock downstream gene expression. Plays a role in the regulation of hematopoiesis even if the mechanisms are unknown. In cancers such as thyroid or lung cancer, it has been described as promoter of cell proliferation, G1-to-S-phase transition and inhibitor of apoptosis. However, it negatively regulates self-renewal of liver cancer cells via suppresion of NOTCH2 signaling. This is Transcriptional and immune response regulator from Homo sapiens (Human).